Reading from the N-terminus, the 110-residue chain is Phosphoribosyl-ATP pyrophosphatase (110 aa).

Belongs to the PRA-PH family.

It is found in the cytoplasm. It carries out the reaction 1-(5-phospho-beta-D-ribosyl)-ATP + H2O = 1-(5-phospho-beta-D-ribosyl)-5'-AMP + diphosphate + H(+). Its pathway is amino-acid biosynthesis; L-histidine biosynthesis; L-histidine from 5-phospho-alpha-D-ribose 1-diphosphate: step 2/9. This chain is Phosphoribosyl-ATP pyrophosphatase, found in Clostridium botulinum (strain ATCC 19397 / Type A).